Here is a 265-residue protein sequence, read N- to C-terminus: NADH dehydrogenase [ubiquinone] iron-sulfur protein 3, mitochondrial (265 aa).

A mitochondrion-targeting transit peptide spans 1 to 33; the sequence is MAALIRNLGARAAVAALSAKHVVPAAGSTALRM.

It belongs to the complex I 30 kDa subunit family. Part of the mitochondrial membrane respiratory chain NADH dehydrogenase (Complex I). Interacts with sicily; interaction is stronger with unprocessed sicily protein.

The protein localises to the mitochondrion. The enzyme catalyses a ubiquinone + NADH + 5 H(+)(in) = a ubiquinol + NAD(+) + 4 H(+)(out). In terms of biological role, core subunit of the mitochondrial membrane respiratory chain NADH dehydrogenase (Complex I) that is believed to belong to the minimal assembly required for catalysis. Complex I functions in the transfer of electrons from NADH to the respiratory chain. The immediate electron acceptor for the enzyme is believed to be ubiquinone. The polypeptide is NADH dehydrogenase [ubiquinone] iron-sulfur protein 3, mitochondrial (Drosophila melanogaster (Fruit fly)).